We begin with the raw amino-acid sequence, 221 residues long: Nuclear phosphoprotein UL3 homolog (221 aa).

The protein belongs to the alphaherpesvirinae HHV-1 UL3 family. Phosphorylated.

The protein resides in the host nucleus. This is Nuclear phosphoprotein UL3 homolog from Varicella-zoster virus (strain Dumas) (HHV-3).